Consider the following 173-residue polypeptide: RNA polymerase sigma factor YlaC (173 aa).

Belongs to the sigma-70 factor family. ECF subfamily.

Its function is as follows. Sigma factors are initiation factors that promote the attachment of RNA polymerase to specific initiation sites and are then released. This sigma factor contributes to oxidative stress resistance. This chain is RNA polymerase sigma factor YlaC (ylaC), found in Bacillus subtilis (strain 168).